Here is a 383-residue protein sequence, read N- to C-terminus: Pheromone-regulated membrane protein 10 (383 aa).

Residues 1 to 65 (MIVSFGDATT…ILADTNLYPP (65 aa)) are Cytoplasmic-facing. Residues 66 to 86 (WMCVLLYAFCSAMVTPYAFGG) traverse the membrane as a helical segment. Asp-87 is a topological domain (extracellular). A helical transmembrane segment spans residues 88-108 (WVNLAISFFMGLCVGSLQFIL). The Cytoplasmic portion of the chain corresponds to 109–117 (SQKSYMYSN). Residues 118–138 (VFEISASIVVSFCGRAFGSIP) form a helical membrane-spanning segment. Residues 139–141 (RSH) lie on the Extracellular side of the membrane. Residues 142 to 162 (ICFGAVTQGSLALILPGYIIL) traverse the membrane as a helical segment. Over 163-180 (CGALELQSRSLVAGAVRM) the chain is Cytoplasmic. Residues 181-201 (FYAIIYSLFLGFGITLGSALF) form a helical membrane-spanning segment. Topologically, residues 202-216 (GWMYHNATNEISCPQ) are extracellular. A helical transmembrane segment spans residues 217 to 237 (LISPWFRFLFVPAFTISISLL). Residues 238–241 (NQAH) lie on the Cytoplasmic side of the membrane. Residues 242–262 (ISQLPVMVFISCTGYVVTYWA) traverse the membrane as a helical segment. Topologically, residues 263–271 (GKHFANSTE) are extracellular. The helical transmembrane segment at 272-292 (FTAALAAFVIGVLGNLYSRIW) threads the bilayer. Position 293 (Lys-293) is a topological domain, cytoplasmic. Residues 294 to 314 (GLAVSAMLPAIFVQVPSGIAS) form a helical membrane-spanning segment. Over 315–352 (QNSLLSGLQSANTIVNANETITTSTSDPSSSMSFGMTM) the chain is Extracellular. The helical transmembrane segment at 353–373 (IQVCVGISVGLFASSLFVYPF) threads the bilayer. The Cytoplasmic portion of the chain corresponds to 374–383 (GKKKTGLFSL).

It belongs to the ThrE exporter (TC 2.A.79) family.

It localises to the membrane. This chain is Pheromone-regulated membrane protein 10 (PRM10), found in Saccharomyces cerevisiae (strain ATCC 204508 / S288c) (Baker's yeast).